A 307-amino-acid chain; its full sequence is Nicotinamide/nicotinic acid mononucleotide adenylyltransferase 2 (307 aa).

The NAD(+) site is built by Ser-16 and Phe-17. His-24 contacts ATP. 2 residues coordinate NAD(+): Trp-92 and Thr-95. Residues Cys-164 and Cys-165 are each lipidated (S-palmitoyl cysteine). The NAD(+) site is built by Gly-200, Asp-202, Leu-212, Trp-213, and Arg-232. Residue 271 to 274 (TKSR) coordinates ATP.

Belongs to the eukaryotic NMN adenylyltransferase family. Monomer. Requires Mg(2+) as cofactor. In terms of processing, degraded in response to injured neurite. Degradation is caused by polyubiquitination by MYCBP2 after recognition by FBXO45. Palmitoylated; palmitoylation is required for membrane association.

The protein localises to the golgi apparatus membrane. Its subcellular location is the cytoplasmic vesicle membrane. It localises to the cytoplasm. It is found in the cell projection. The protein resides in the axon. The enzyme catalyses beta-nicotinamide D-ribonucleotide + ATP + H(+) = diphosphate + NAD(+). It carries out the reaction nicotinate beta-D-ribonucleotide + ATP + H(+) = deamido-NAD(+) + diphosphate. It functions in the pathway cofactor biosynthesis; NAD(+) biosynthesis; NAD(+) from nicotinamide D-ribonucleotide: step 1/1. It participates in cofactor biosynthesis; NAD(+) biosynthesis; deamido-NAD(+) from nicotinate D-ribonucleotide: step 1/1. Inhibited by P1-(adenosine-5')-P3-(nicotinamide-riboside-5')-triphosphate (Np3AD) and P1-(adenosine-5')-P4-(nicotinamide-riboside-5')-tetraphosphate (Np4AD). Functionally, nicotinamide/nicotinate-nucleotide adenylyltransferase that acts as an axon maintenance factor. Axon survival factor required for the maintenance of healthy axons: acts by delaying Wallerian axon degeneration, an evolutionarily conserved process that drives the loss of damaged axons. Catalyzes the formation of NAD(+) from nicotinamide mononucleotide (NMN) and ATP. Can also use the deamidated form; nicotinic acid mononucleotide (NaMN) as substrate but with a lower efficiency. Cannot use triazofurin monophosphate (TrMP) as substrate. Also catalyzes the reverse reaction, i.e. the pyrophosphorolytic cleavage of NAD(+). For the pyrophosphorolytic activity prefers NAD(+), NADH and NaAD as substrates and degrades nicotinic acid adenine dinucleotide phosphate (NHD) less effectively. Fails to cleave phosphorylated dinucleotides NADP(+), NADPH and NaADP(+). Also acts as an activator of ADP-ribosylation by supporting the catalytic activity of PARP16 and promoting mono-ADP-ribosylation of ribosomes by PARP16. May be involved in the maintenance of axonal integrity. The sequence is that of Nicotinamide/nicotinic acid mononucleotide adenylyltransferase 2 (Nmnat2) from Rattus norvegicus (Rat).